Here is a 66-residue protein sequence, read N- to C-terminus: Photosystem II reaction center protein J (66 aa).

Residues 1–23 form a disordered region; it reads MSGNKSPFPDGRIPDRLPDGRPA. A helical membrane pass occupies residues 37–57; the sequence is LWLVATAGGMAVLFVVGLFFY.

This sequence belongs to the PsbJ family. As to quaternary structure, PSII is composed of 1 copy each of membrane proteins PsbA, PsbB, PsbC, PsbD, PsbE, PsbF, PsbH, PsbI, PsbJ, PsbK, PsbL, PsbM, PsbT, PsbX, PsbY, PsbZ, Psb30/Ycf12, peripheral proteins PsbO, CyanoQ (PsbQ), PsbU, PsbV and a large number of cofactors. It forms dimeric complexes.

It localises to the cellular thylakoid membrane. In terms of biological role, one of the components of the core complex of photosystem II (PSII). PSII is a light-driven water:plastoquinone oxidoreductase that uses light energy to abstract electrons from H(2)O, generating O(2) and a proton gradient subsequently used for ATP formation. It consists of a core antenna complex that captures photons, and an electron transfer chain that converts photonic excitation into a charge separation. This Parasynechococcus marenigrum (strain WH8102) protein is Photosystem II reaction center protein J.